The chain runs to 161 residues: Nucleotide-binding protein azo2183 (161 aa).

The protein belongs to the YajQ family.

Functionally, nucleotide-binding protein. In Azoarcus sp. (strain BH72), this protein is Nucleotide-binding protein azo2183.